The following is a 280-amino-acid chain: Protein IMPACT homolog (280 aa).

The RWD domain maps to 9–109; sequence DELLALESIY…QAAAERESKL (101 aa).

Belongs to the IMPACT family. In terms of assembly, interacts (via N-terminus) with gcn1 (via C-terminus); this interaction reduces the gcn1-gcn20 complex formation and prevents the interaction of gcn1 with gcn2 protein kinase and gcn2 activation in amino acid-starved cells. Interacts (via C-terminus) with act1; this interaction occurs in a gcn1-independent manner. Interacts with rpl39; this interaction occurs in a gcn1-independent manner. Associates (via middle region) with ribosomes; this association occurs in a gcn1-independent manner and persists under amino acid starvation conditions.

It localises to the cytoplasm. It is found in the nucleus. Translational regulator that ensures constant high levels of translation under amino acid starvation. Plays a role as a negative regulator of the gcn2 kinase activity; impairs gcn1-mediated gcn2 activation, and hence gcn2-mediated eIF-2-alpha phosphorylation in amino acid-starved cells and subsequent down-regulation of protein synthesis. In normal conditions, it resides in a actin complex and has no activity. In Schizosaccharomyces pombe (strain 972 / ATCC 24843) (Fission yeast), this protein is Protein IMPACT homolog (yih1).